A 440-amino-acid polypeptide reads, in one-letter code: MADPDVLTEVPAALKRLAKYVIRGFYGIEHVLALDILIRNPCVKEEDMLELLKFDRKQLRSVLNNLKGDKFIKCRMRVETAADGKTTRHNYYFINYRTLVNVVKYKLDHMRRRIETDERNSTNRASFKCPVCCSTFTDLEANQLFDPMTGTFRCTFCHTEVEEDESAMPKKDARTLLARFNEQIEPIYALLRETEDVNLAYEILEPEPTEIPALKQSKDRAATAAGAAGLAGGHHREAWTNKGPSYEDLYTQNVVINMDDQDDVHRPSLEGKAAKERPIWLRESTVQGAYSSEEMKEGGIDVDTFQEREEARAGPDDNEEVMRALLIHEKKTSSVTAGSVGAAAPVTAANGSDSESETSESDDDSPPRPAAAAPPHHHRDEDEEDEEFEEVADDPIVMVAGCPFSYSEVSQRPELVAQMTPEEKEAYIAMGQRMFEDLFE.

N-acetylalanine is present on alanine 2. The region spanning leucine 14 to lysine 104 is the HTH TFE/IIEalpha-type domain. N6-acetyllysine is present on lysine 67. Residues cysteine 129, cysteine 132, cysteine 154, and cysteine 157 each coordinate Zn(2+). A C4-type zinc finger spans residues cysteine 129–cysteine 157. Serine 268 carries the post-translational modification Phosphoserine. Over residues serine 333–aspartate 353 the composition is skewed to low complexity. The tract at residues serine 333–proline 395 is disordered. Acidic residues-rich tracts occupy residues serine 354–aspartate 364 and glutamate 381–aspartate 393.

It belongs to the TFIIE alpha subunit family. As to quaternary structure, tetramer of two alpha and two beta chains. Interacts with TAF6/TAFII80. Interacts with ATF7IP. Interacts with SND1. Part of TBP-based Pol II pre-initiation complex (PIC), in which Pol II core assembles with general transcription factors and other specific initiation factors including GTF2E1, GTF2E2, GTF2F1, GTF2F2, TCEA1, ERCC2, ERCC3, GTF2H2, GTF2H3, GTF2H4, GTF2H5, GTF2A1, GTF2A2, GTF2B and TBP; this large multi-subunit PIC complex mediates DNA unwinding and targets Pol II core to the transcription start site where the first phosphodiester bond forms.

It is found in the nucleus. In terms of biological role, recruits TFIIH to the initiation complex and stimulates the RNA polymerase II C-terminal domain kinase and DNA-dependent ATPase activities of TFIIH. Both TFIIH and TFIIE are required for promoter clearance by RNA polymerase. The sequence is that of General transcription factor IIE subunit 1 (Gtf2e1) from Mus musculus (Mouse).